We begin with the raw amino-acid sequence, 267 residues long: Diphthine synthase (267 aa).

S-adenosyl-L-methionine contacts are provided by residues Leu-9, Asp-87, Ile-90, Ser-115 to Ile-116, Leu-166, Leu-205, and His-230.

Belongs to the diphthine synthase family. As to quaternary structure, homodimer.

The enzyme catalyses 2-[(3S)-amino-3-carboxypropyl]-L-histidyl-[translation elongation factor 2] + 3 S-adenosyl-L-methionine = diphthine-[translation elongation factor 2] + 3 S-adenosyl-L-homocysteine + 3 H(+). It participates in protein modification; peptidyl-diphthamide biosynthesis. In terms of biological role, S-adenosyl-L-methionine-dependent methyltransferase that catalyzes the trimethylation of the amino group of the modified target histidine residue in translation elongation factor 2 (EF-2), to form an intermediate called diphthine. The three successive methylation reactions represent the second step of diphthamide biosynthesis. This Staphylothermus marinus (strain ATCC 43588 / DSM 3639 / JCM 9404 / F1) protein is Diphthine synthase.